We begin with the raw amino-acid sequence, 396 residues long: Cytochrome b (396 aa).

Helical transmembrane passes span 32 to 52, 76 to 98, 113 to 133, and 179 to 199; these read FGSLLGVNLVILIISGLTLAM, WLLRYIHANGASFFFIWVYLHIG, LWSIGVVIFILMMATAFIGYV, and FFSLHYLLPFILAALVVMHLL. Heme b is bound by residues histidine 82 and histidine 96. Residues histidine 183 and histidine 197 each coordinate heme b. Residue histidine 202 coordinates a ubiquinone. A run of 4 helical transmembrane segments spans residues 225-245, 289-309, 321-341, and 348-368; these read FTSKDLVGFVWMAILLSIFVF, LGGVIAMFGALLILFPLALIH, LLNLLFWIFVFNFFVLLWVGA, and YILIGQISTIIYFLYFVILMI.

The protein belongs to the cytochrome b family. Fungal cytochrome b-c1 complex contains 10 subunits; 3 respiratory subunits, 2 core proteins and 5 low-molecular weight proteins. Cytochrome b-c1 complex is a homodimer. Heme b is required as a cofactor.

The protein resides in the mitochondrion inner membrane. Component of the ubiquinol-cytochrome c reductase complex (complex III or cytochrome b-c1 complex) that is part of the mitochondrial respiratory chain. The b-c1 complex mediates electron transfer from ubiquinol to cytochrome c. Contributes to the generation of a proton gradient across the mitochondrial membrane that is then used for ATP synthesis. The chain is Cytochrome b (cob) from Spizellomyces punctatus.